A 153-amino-acid chain; its full sequence is Calmodulin-like protein 4 (153 aa).

EF-hand domains follow at residues 8 to 43 (DAIQ…LGTC), 44 to 79 (PTPG…QQKQ), 81 to 116 (DPEN…MGEK), and 117 to 152 (LTPE…PVPD).

Belongs to the calmodulin family. As to quaternary structure, associates with the IMAC/intermicrovillar adhesion complex.

The protein resides in the cell projection. It is found in the microvillus. Its function is as follows. As part of the intermicrovillar adhesion complex/IMAC plays a role in epithelial brush border differentiation, controlling microvilli organization and length. Acts as a light chain for MYO7B and is required for efficient targeting of the IMAC to the tips of border brush microvilli. The protein is Calmodulin-like protein 4 (calml4) of Xenopus tropicalis (Western clawed frog).